The primary structure comprises 459 residues: MIKNGLPHEPEFQQAYNELVSALEESTLFTEKPEYKKVIPVVSIPERIIQFRVAWENDNGDVEVNNGFRVQFNSSLGPYKGGLRFHPSVNLSILKFLGFEQIFKNALTGLSMGGGKGGCDFNPKGRSDGEIRRFCVAFMRQLARYIGADTDVPAGDIGVGGREIGYLFGAYKQMQNNWYGVLTGKGLTWGGSLIRPEATGYVSFTTLKKMIEKATNGKESFKGKRVELSGSGNVAQYAALKVIELGGIVVSLSDSKGSIVSKNGIVPEQVLEIAAAKLKFKSLEEITKESVKLFSGENSVEYLAGVRPWAKVGHFDVALPSATQKEVSGEEEAKALVEAGCKYIAEGSNMGSTKEAIDVFEANRSNNVWYAPGKAANCGGVAVSGLEMAQNSQRVQWSAEEVDAKLKNIMYTCFDNCYDPAIKYSAEKNADGLPSLLKGANIASFIKVADAMFDQGDVY.

K116 is an active-site residue.

Belongs to the Glu/Leu/Phe/Val dehydrogenases family. Homohexamer.

It carries out the reaction L-glutamate + NADP(+) + H2O = 2-oxoglutarate + NH4(+) + NADPH + H(+). This Schwanniomyces occidentalis (Yeast) protein is NADP-specific glutamate dehydrogenase (GDHA).